We begin with the raw amino-acid sequence, 326 residues long: Thioredoxin reductase (326 aa).

FAD is bound at residue 55 to 62; sequence EGPEPGGQ. Cysteine 156 and cysteine 159 are oxidised to a cystine. Residue 298–307 coordinates FAD; sequence DVSNKLYAQA.

Belongs to the class-II pyridine nucleotide-disulfide oxidoreductase family. As to quaternary structure, homodimer. It depends on FAD as a cofactor.

It localises to the cytoplasm. The catalysed reaction is [thioredoxin]-dithiol + NADP(+) = [thioredoxin]-disulfide + NADPH + H(+). The sequence is that of Thioredoxin reductase (trxB) from Borreliella burgdorferi (strain ATCC 35210 / DSM 4680 / CIP 102532 / B31) (Borrelia burgdorferi).